The sequence spans 377 residues: Chaperone protein DnaJ (377 aa).

The 66-residue stretch at 4-69 (DYYEALGVER…QKRAAYDRFG (66 aa)) folds into the J domain. A CR-type zinc finger spans residues 135–213 (GKTAQIRVPT…CHGQGRVTQE (79 aa)). Cysteine 148, cysteine 151, cysteine 165, cysteine 168, cysteine 187, cysteine 190, cysteine 201, and cysteine 204 together coordinate Zn(2+). CXXCXGXG motif repeat units follow at residues 148–155 (CDECSGSG), 165–172 (CTMCSGSG), 187–194 (CPTCNGRG), and 201–208 (CGKCHGQG).

Belongs to the DnaJ family. As to quaternary structure, homodimer. Zn(2+) serves as cofactor.

It is found in the cytoplasm. In terms of biological role, participates actively in the response to hyperosmotic and heat shock by preventing the aggregation of stress-denatured proteins and by disaggregating proteins, also in an autonomous, DnaK-independent fashion. Unfolded proteins bind initially to DnaJ; upon interaction with the DnaJ-bound protein, DnaK hydrolyzes its bound ATP, resulting in the formation of a stable complex. GrpE releases ADP from DnaK; ATP binding to DnaK triggers the release of the substrate protein, thus completing the reaction cycle. Several rounds of ATP-dependent interactions between DnaJ, DnaK and GrpE are required for fully efficient folding. Also involved, together with DnaK and GrpE, in the DNA replication of plasmids through activation of initiation proteins. The protein is Chaperone protein DnaJ of Brucella anthropi (strain ATCC 49188 / DSM 6882 / CCUG 24695 / JCM 21032 / LMG 3331 / NBRC 15819 / NCTC 12168 / Alc 37) (Ochrobactrum anthropi).